A 360-amino-acid chain; its full sequence is Teichoic acids export ATP-binding protein TagH (360 aa).

The region spanning 24-245 (LKAMFFPKTR…YEDYINWFNK (222 aa)) is the ABC transporter domain. Residue 59 to 66 (GINGSGKS) participates in ATP binding. Residues 246 to 360 (LSKEEKEAHK…GDIDNSDVSL (115 aa)) are unknown. The tract at residues 270–290 (EEQENGKAGSGGDGTQPIVQP) is disordered.

Belongs to the ABC transporter superfamily. Teichoic acids exporter (TC 3.A.1.104.1) family. The complex is composed of two ATP-binding proteins (TagH) and two transmembrane proteins (TagG).

The protein resides in the cell membrane. It carries out the reaction ATP + H2O + teichoic acidSide 1 = ADP + phosphate + teichoic acidSide 2.. In terms of biological role, part of the ABC transporter complex TagGH involved in teichoic acids export. Responsible for energy coupling to the transport system. The protein is Teichoic acids export ATP-binding protein TagH of Shouchella clausii (strain KSM-K16) (Alkalihalobacillus clausii).